The sequence spans 93 residues: UPF0367 protein tsr0804 (93 aa).

It belongs to the UPF0367 family.

The polypeptide is UPF0367 protein tsr0804 (Thermosynechococcus vestitus (strain NIES-2133 / IAM M-273 / BP-1)).